The following is a 199-amino-acid chain: Large ribosomal subunit protein eL13A (199 aa).

A phosphothreonine mark is found at T144 and T152.

It belongs to the eukaryotic ribosomal protein eL13 family. In terms of assembly, component of the large ribosomal subunit (LSU). Mature yeast ribosomes consist of a small (40S) and a large (60S) subunit. The 40S small subunit contains 1 molecule of ribosomal RNA (18S rRNA) and 33 different proteins (encoded by 57 genes). The large 60S subunit contains 3 rRNA molecules (25S, 5.8S and 5S rRNA) and 46 different proteins (encoded by 81 genes).

It localises to the cytoplasm. Its function is as follows. Component of the ribosome, a large ribonucleoprotein complex responsible for the synthesis of proteins in the cell. The small ribosomal subunit (SSU) binds messenger RNAs (mRNAs) and translates the encoded message by selecting cognate aminoacyl-transfer RNA (tRNA) molecules. The large subunit (LSU) contains the ribosomal catalytic site termed the peptidyl transferase center (PTC), which catalyzes the formation of peptide bonds, thereby polymerizing the amino acids delivered by tRNAs into a polypeptide chain. The nascent polypeptides leave the ribosome through a tunnel in the LSU and interact with protein factors that function in enzymatic processing, targeting, and the membrane insertion of nascent chains at the exit of the ribosomal tunnel. The polypeptide is Large ribosomal subunit protein eL13A (Saccharomyces cerevisiae (strain ATCC 204508 / S288c) (Baker's yeast)).